The chain runs to 282 residues: UDP-N-acetylenolpyruvoylglucosamine reductase (282 aa).

In terms of domain architecture, FAD-binding PCMH-type spans 15–179 (IKSFAKYVYF…LSAEFEFEYK (165 aa)). R157 is a catalytic residue. S207 functions as the Proton donor in the catalytic mechanism. The active site involves E278.

The protein belongs to the MurB family. The cofactor is FAD.

It is found in the cytoplasm. The catalysed reaction is UDP-N-acetyl-alpha-D-muramate + NADP(+) = UDP-N-acetyl-3-O-(1-carboxyvinyl)-alpha-D-glucosamine + NADPH + H(+). Its pathway is cell wall biogenesis; peptidoglycan biosynthesis. Functionally, cell wall formation. This chain is UDP-N-acetylenolpyruvoylglucosamine reductase, found in Francisella tularensis subsp. tularensis (strain SCHU S4 / Schu 4).